We begin with the raw amino-acid sequence, 403 residues long: MSGRVGDLSPRQKEALAKFRENVQDVLPALPNPDDYFLLRWLRARSFDLQKSEAMLRKHVEFRKQKDIDNIISWQPPEVIQQYLSGGMCGYDLDGCPVWYDIIGPLDAKGLLFSASKQDLLRTKMRECELLLQECAHQTTKLGRKVETITIIYDCEGLGLKHLWKPAVEAYGEFLCMFEENYPETLKRLFVVKAPKLFPVAYNLIKPFLSEDTRKKIMVLGANWKEVLLKHISPDQVPVEYGGTMTDPDGNPKCKSKINYGGDIPRKYYVRDQVKQQYEHSVQISRGSSHQVEYEILFPGCVLRWQFMSDGADVGFGIFLKTKMGERQRAGEMTEVLPNQRYNSHLVPEDGTLTCSDPGIYVLRFDNTYSFIHAKKVNFTVEVLLPDKASEEKMKQLGAGTPK.

K51 is subject to N6-succinyllysine. Positions 76-249 constitute a CRAL-TRIO domain; that stretch reads PPEVIQQYLS…EYGGTMTDPD (174 aa). N6-succinyllysine occurs at positions 253 and 257. One can recognise a GOLD domain in the interval 275-383; that stretch reads KQQYEHSVQI…AKKVNFTVEV (109 aa). K393 is modified (N6-succinyllysine).

Monomer. As to expression, widely expressed. Strong expression in liver, brain and prostate.

Its subcellular location is the cytoplasm. It localises to the nucleus. Its function is as follows. Carrier protein. Binds to some hydrophobic molecules and promotes their transfer between the different cellular sites. Binds with high affinity to alpha-tocopherol. Also binds with a weaker affinity to other tocopherols and to tocotrienols. May have a transcriptional activatory activity via its association with alpha-tocopherol. Probably recognizes and binds some squalene structure, suggesting that it may regulate cholesterol biosynthesis by increasing the transfer of squalene to a metabolic active pool in the cell. The protein is SEC14-like protein 2 (SEC14L2) of Homo sapiens (Human).